We begin with the raw amino-acid sequence, 195 residues long: Pyruvoyl-dependent arginine decarboxylase AaxB (195 aa).

Ser53 is modified (pyruvic acid (Ser)).

The protein belongs to the pyruvoyl-dependent arginine decarboxylase family. As to quaternary structure, trimer of an alpha-beta dimer. Pyruvate serves as cofactor.

Its subcellular location is the cytoplasm. It catalyses the reaction L-arginine + H(+) = agmatine + CO2. In terms of biological role, part of the AaxABC system, catalyzes the decarboxylation of L-arginine. The arginine uptake by the bacterium in the macrophage may be a virulence factor against the host innate immune response. In Chlamydia abortus (strain DSM 27085 / S26/3) (Chlamydophila abortus), this protein is Pyruvoyl-dependent arginine decarboxylase AaxB (aaxB).